Reading from the N-terminus, the 611-residue chain is Chaperone protein DnaK (611 aa).

Position 173 is a phosphothreonine; by autocatalysis (threonine 173). The segment covering alanine 577–glycine 591 has biased composition (low complexity). The interval alanine 577 to lysine 611 is disordered. Acidic residues predominate over residues valine 599–lysine 611.

This sequence belongs to the heat shock protein 70 family.

Its function is as follows. Acts as a chaperone. In Lysinibacillus sphaericus (strain C3-41), this protein is Chaperone protein DnaK.